Here is a 289-residue protein sequence, read N- to C-terminus: Probable ABC transporter permease protein BruAb2_0483 (289 aa).

6 helical membrane passes run 9 to 29, 70 to 90, 99 to 119, 144 to 166, 213 to 233, and 258 to 278; these read FLILPSLLLAAVVIFWPVVHL, VWTVAVVGGALVLSIPVAIIL, VARVIIMLPWAVSLTMTAIFW, IQWLASAATAFPMQILVGILVTV, IAIVLNTIYVFNSFPIIWVMT, and FGEASAVSLIMLAILLVFTVI. Residues 65-279 enclose the ABC transmembrane type-1 domain; that stretch reads LWRTAVWTVA…AILLVFTVIY (215 aa).

The protein belongs to the binding-protein-dependent transport system permease family. As to quaternary structure, the complex is composed of two ATP-binding proteins (BruAb2_0487), two transmembrane proteins (BruAb2_0483) and a solute-binding protein (BruAb2_0484).

Its subcellular location is the cell inner membrane. Probably part of an ABC transporter complex. Probably responsible for the translocation of the substrate across the membrane. This chain is Probable ABC transporter permease protein BruAb2_0483, found in Brucella abortus biovar 1 (strain 9-941).